The primary structure comprises 1339 residues: Receptor tyrosine-protein kinase erbB-3 (1339 aa).

A signal peptide spans 1 to 19 (MSAIGTLQVLGFLLSLARG). Residues 20 to 641 (SEMGNSQAVC…QAEVLMSKPH (622 aa)) lie on the Extracellular side of the membrane. N126 is a glycosylation site (N-linked (GlcNAc...) asparagine). Disulfide bonds link C186-C194, C190-C202, C210-C218, C214-C226, C227-C235, C231-C243, C246-C255, C259-C286, C290-C301, C305-C320, and C323-C327. N-linked (GlcNAc...) asparagine glycosylation is present at N250. N353, N408, N414, N437, and N469 each carry an N-linked (GlcNAc...) asparagine glycan. Intrachain disulfides connect C500-C509, C504-C517, C520-C529, C533-C549, C552-C565, C556-C573, C576-C585, C589-C610, C613-C621, and C617-C629. N522 is a glycosylation site (N-linked (GlcNAc...) asparagine). N-linked (GlcNAc...) asparagine glycosylation occurs at N566. An N-linked (GlcNAc...) asparagine glycan is attached at N616. The chain crosses the membrane as a helical span at residues 642–662 (LVIAVTVGLTVIFLILGGSFL). Residues 663-1339 (YWRGRRIQNK…LFPKANAQRI (677 aa)) are Cytoplasmic-facing. Position 684 is a phosphoserine (S684). Residues 707 to 964 (LRKLKVLGSG…TFKELANEFT (258 aa)) form the Protein kinase domain. ATP contacts are provided by residues 713-721 (LGSGVFGTV), K740, 786-788 (QYL), and 832-837 (DLALRN). Residue D832 is the Proton acceptor of the active site. S980 carries the phosphoserine modification. Disordered regions lie at residues 1028–1052 (LSLP…SGYM), 1077–1156 (RPIS…GNGY), and 1181–1212 (SVLG…PRPG). The span at 1185-1195 (TEEEDEDEEYE) shows a compositional bias: acidic residues.

This sequence belongs to the protein kinase superfamily. Tyr protein kinase family. EGF receptor subfamily. Monomer and homodimer. Heterodimer with each of the other ERBB receptors (Potential). Interacts with CSPG5, PA2G4, GRB7 and MUC1. Interacts with MYOC. Found in a ternary complex with NRG1 and ITGAV:ITGB3 or ITGA6:ITGB4. In terms of processing, autophosphorylated. Ligand-binding increases phosphorylation on tyrosine residues and promotes its association with the p85 subunit of phosphatidylinositol 3-kinase. As to expression, in the muscle, expression localizes to the synaptic sites of muscle fibers.

It localises to the membrane. The enzyme catalyses L-tyrosyl-[protein] + ATP = O-phospho-L-tyrosyl-[protein] + ADP + H(+). Its function is as follows. Tyrosine-protein kinase that plays an essential role as cell surface receptor for neuregulins. Binds to neuregulin-1 (NRG1) and is activated by it; ligand-binding increases phosphorylation on tyrosine residues and promotes its association with the p85 subunit of phosphatidylinositol 3-kinase. May also be activated by CSPG5. Involved in the regulation of myeloid cell differentiation. In Mus musculus (Mouse), this protein is Receptor tyrosine-protein kinase erbB-3 (Erbb3).